Consider the following 249-residue polypeptide: Cis-4-hydroxycyclohexanecarboxylate dehydrogenase (249 aa).

NAD(+)-binding residues include D38, D63, V64, N90, Y156, K160, A189, and T191. Residue Y156 is the Proton acceptor of the active site.

The protein belongs to the short-chain dehydrogenases/reductases (SDR) family. Homotetramer.

The enzyme catalyses cis-4-hydroxycyclohexane-1-carboxylate + NAD(+) = 4-oxocyclohexane-1-carboxylate + NADH + H(+). In terms of biological role, dehydrogenase involved in a cyclohexanecarboxylate (CHCA) degradation pathway. Catalyzes the NAD(+)-dependent dehydrogenation of cis-4-hydroxycyclohexanecarboxylate (cis-4-hydroxyCHCA) to form 4-oxocyclohexanecarboxylate (4-oxoCHCA). Is highly specific for the cis-4-hydroxy derivative and shows only weak activity with trans-4-hydroxyCHCA. Cannot use NADP(+). The sequence is that of Cis-4-hydroxycyclohexanecarboxylate dehydrogenase from Sinomonas cyclohexanicum (Corynebacterium cyclohexanicum).